Reading from the N-terminus, the 249-residue chain is MILLIDIGNSRTKYVQLISGELSATTQLNNSEFSAEYFTKYFNQASQLIVANVAKSALTDELATWCAREKISYKQVHSEQKKNTLISAYQEPTTLGIDRWLALLGTIHLYPQENVLIIDAGTATTVDLLTSNGQHQGGWILAGINALFTSILSHSTLVHAKSKTMPSLAFGANTSDNVNNACWAATLGMIERAIEQAQQLGDINRIILTGGDGKALTRLLLAQTTENILAVENIQFIDNLIFFGLQEYA.

6-13 (DIGNSRTK) lines the ATP pocket. Residues Tyr89 and 96 to 99 (GIDR) contribute to the substrate site. The Proton acceptor role is filled by Asp98. K(+) is bound at residue Asp119. Thr122 is an ATP binding site. Residue Thr174 coordinates substrate.

Belongs to the type III pantothenate kinase family. Homodimer. NH4(+) serves as cofactor. The cofactor is K(+).

It is found in the cytoplasm. It catalyses the reaction (R)-pantothenate + ATP = (R)-4'-phosphopantothenate + ADP + H(+). Its pathway is cofactor biosynthesis; coenzyme A biosynthesis; CoA from (R)-pantothenate: step 1/5. In terms of biological role, catalyzes the phosphorylation of pantothenate (Pan), the first step in CoA biosynthesis. This Colwellia psychrerythraea (strain 34H / ATCC BAA-681) (Vibrio psychroerythus) protein is Type III pantothenate kinase.